Reading from the N-terminus, the 228-residue chain is Transmembrane protein 186 (228 aa).

Residues 1–93 (MDMMMMSTRL…RGLRALSRLK (93 aa)) lie on the Mitochondrial matrix side of the membrane. A helical membrane pass occupies residues 94–112 (LLQTGITVVLLPTVYYLHL). The Mitochondrial intermembrane segment spans residues 113–118 (QGQASV). A helical transmembrane segment spans residues 119–141 (LVLNRSIGIALFAGVMLYSISHF). Over 142 to 228 (VRRVVGMMYL…AFGKVFGSLS (87 aa)) the chain is Mitochondrial matrix.

This sequence belongs to the TMEM186 family.

It is found in the mitochondrion inner membrane. Its function is as follows. May be required for efficient assembly of the mitochondrial complex I. The protein is Transmembrane protein 186 of Danio rerio (Zebrafish).